Reading from the N-terminus, the 138-residue chain is Large ribosomal subunit protein bL19 (138 aa).

This sequence belongs to the bacterial ribosomal protein bL19 family.

In terms of biological role, this protein is located at the 30S-50S ribosomal subunit interface and may play a role in the structure and function of the aminoacyl-tRNA binding site. The protein is Large ribosomal subunit protein bL19 of Rickettsia massiliae (strain Mtu5).